The primary structure comprises 332 residues: 2,3-diketo-L-gulonate reductase (332 aa).

Histidine 44 functions as the Proton donor in the catalytic mechanism. NAD(+) contacts are provided by residues 168 to 174, 224 to 225, and 304 to 306; these read ITMVDMS, WK, and GHE.

This sequence belongs to the LDH2/MDH2 oxidoreductase family. DlgD subfamily. As to quaternary structure, homodimer.

The protein resides in the cytoplasm. The enzyme catalyses 3-dehydro-L-gulonate + NAD(+) = 2,3-dioxo-L-gulonate + NADH + H(+). It catalyses the reaction 3-dehydro-L-gulonate + NADP(+) = 2,3-dioxo-L-gulonate + NADPH + H(+). Catalyzes the reduction of 2,3-diketo-L-gulonate in the presence of NADH, to form 3-keto-L-gulonate. This chain is 2,3-diketo-L-gulonate reductase, found in Escherichia coli O127:H6 (strain E2348/69 / EPEC).